The following is a 250-amino-acid chain: Ribosomal RNA small subunit methyltransferase J (250 aa).

S-adenosyl-L-methionine-binding positions include 101–102 (RD), 117–118 (ER), 153–154 (SS), and D171.

This sequence belongs to the methyltransferase superfamily. RsmJ family.

Its subcellular location is the cytoplasm. It carries out the reaction guanosine(1516) in 16S rRNA + S-adenosyl-L-methionine = N(2)-methylguanosine(1516) in 16S rRNA + S-adenosyl-L-homocysteine + H(+). Functionally, specifically methylates the guanosine in position 1516 of 16S rRNA. This Escherichia coli (strain UTI89 / UPEC) protein is Ribosomal RNA small subunit methyltransferase J.